The chain runs to 74 residues: Tau-AnmTx Ueq 12-1 (74 aa).

The N-terminal stretch at 1–18 is a signal peptide; sequence MCLLMLVLGAMYVQGWHS. The propeptide at 19 to 27 is removed in mature form; sequence AGFGKRTLK. Intrachain disulfides connect Cys30–Cys37, Cys40–Cys71, Cys46–Cys64, Cys51–Cys72, and Cys58–Cys73.

Belongs to the Cnidaria small cysteine-rich protein (SCRiP) family. In terms of tissue distribution, detected in mucus secreted from ectoderm.

It is found in the secreted. Functionally, potentiates activation of mammalian TRPA1, a non-selective cation channel involved in perception of pain, in vitro yet has an analgesic and anti-inflammatory effect in vivo. Has antibacterial activity against C.glutamicum (MIC=50 uM) and, to a lesser extent, against S.aureus but not against P.aeruginosa or E.coli. The chain is Tau-AnmTx Ueq 12-1 from Urticina eques (Sea anemone).